Reading from the N-terminus, the 397-residue chain is Argininosuccinate synthase (397 aa).

8-16 contributes to the ATP binding site; the sequence is AYSGGLDTS. 2 residues coordinate L-citrulline: Y86 and S91. G116 contributes to the ATP binding site. L-aspartate is bound by residues T118, N122, and D123. Position 122 (N122) interacts with L-citrulline. Positions 126, 175, 184, 260, and 272 each coordinate L-citrulline.

Belongs to the argininosuccinate synthase family. Type 1 subfamily. As to quaternary structure, homotetramer.

The protein resides in the cytoplasm. The catalysed reaction is L-citrulline + L-aspartate + ATP = 2-(N(omega)-L-arginino)succinate + AMP + diphosphate + H(+). It participates in amino-acid biosynthesis; L-arginine biosynthesis; L-arginine from L-ornithine and carbamoyl phosphate: step 2/3. The chain is Argininosuccinate synthase from Clostridium botulinum (strain Kyoto / Type A2).